A 431-amino-acid polypeptide reads, in one-letter code: Histidinol dehydrogenase (431 aa).

NAD(+) is bound by residues Tyr-127, Gln-185, and Asn-208. Substrate is bound by residues Ser-234, Gln-256, and His-259. The Zn(2+) site is built by Gln-256 and His-259. Catalysis depends on proton acceptor residues Glu-323 and His-324. His-324, Asp-357, Glu-411, and His-416 together coordinate substrate. Asp-357 is a binding site for Zn(2+). Position 416 (His-416) interacts with Zn(2+).

The protein belongs to the histidinol dehydrogenase family. It depends on Zn(2+) as a cofactor.

The catalysed reaction is L-histidinol + 2 NAD(+) + H2O = L-histidine + 2 NADH + 3 H(+). It functions in the pathway amino-acid biosynthesis; L-histidine biosynthesis; L-histidine from 5-phospho-alpha-D-ribose 1-diphosphate: step 9/9. Its function is as follows. Catalyzes the sequential NAD-dependent oxidations of L-histidinol to L-histidinaldehyde and then to L-histidine. This Vibrio cholerae serotype O1 (strain ATCC 39315 / El Tor Inaba N16961) protein is Histidinol dehydrogenase.